The following is a 420-amino-acid chain: L-rhamnose isomerase (420 aa).

Positions 264, 296, and 298 each coordinate Mn(2+).

It belongs to the rhamnose isomerase family. The cofactor is Mn(2+).

It localises to the cytoplasm. It carries out the reaction L-rhamnopyranose = L-rhamnulose. Its pathway is carbohydrate degradation; L-rhamnose degradation; glycerone phosphate from L-rhamnose: step 1/3. Catalyzes the interconversion of L-rhamnose and L-rhamnulose. This is L-rhamnose isomerase from Listeria innocua serovar 6a (strain ATCC BAA-680 / CLIP 11262).